Here is a 144-residue protein sequence, read N- to C-terminus: Small ribosomal subunit protein uS9 (144 aa).

The residue at position 2 (Thr2) is an N-acetylthreonine. Positions 124 to 144 (RRESKKFGGPGARARYQKSYR) are disordered.

This sequence belongs to the universal ribosomal protein uS9 family.

This is Small ribosomal subunit protein uS9 (rps-16) from Caenorhabditis elegans.